Reading from the N-terminus, the 151-residue chain is Transcriptional regulator SyrB (151 aa).

Residues 1-61 (MADESNTGPV…RYSEQERNDK (61 aa)) form a disordered region. The span at 33–48 (PQKAAAEPAQPKAPAA) shows a compositional bias: low complexity. Residues 52–61 (RYSEQERNDK) are compositionally biased toward basic and acidic residues.

This sequence belongs to the SyrB family.

Responsible for the repression of SyrM activity. The chain is Transcriptional regulator SyrB (syrB) from Rhizobium meliloti (strain 1021) (Ensifer meliloti).